Consider the following 317-residue polypeptide: Brain-specific serine protease 4 (317 aa).

Positions 1-32 (MVVSGAPPALGGGCLGTFTSLLLLASTAILNA) are cleaved as a signal peptide. In terms of domain architecture, Peptidase S1 spans 50–290 (VVGGEDSTDS…HRSWVEKIVQ (241 aa)). An N-linked (GlcNAc...) asparagine glycan is attached at Asn-70. A disulfide bridge links Cys-75 with Cys-91. Active-site charge relay system residues include His-90 and Asp-141. 3 disulfide bridges follow: Cys-175–Cys-248, Cys-208–Cys-227, and Cys-238–Cys-266. Ser-242 (charge relay system) is an active-site residue.

Belongs to the peptidase S1 family. In terms of tissue distribution, expressed abundantly in the epithelial cells of the airways, including trachea, esophagus and fetal lung. Scarce in adult lung. Expressed at low levels in placenta, pancreas, prostate and thyroid gland.

The protein resides in the secreted. Preferentially cleaves the synthetic substrate H-D-Leu-Thr-Arg-pNA compared to tosyl-Gly-Pro-Arg-pNA. The chain is Brain-specific serine protease 4 (PRSS22) from Homo sapiens (Human).